The following is a 398-amino-acid chain: Cytochrome b (398 aa).

The next 4 helical transmembrane spans lie at 38–58 (FGPL…FLAM), 82–104 (WFLR…FHMF), 119–139 (VRCS…IGYV), and 185–205 (FFSL…LHLG). Heme b is bound by residues His88 and His102. Positions 189 and 203 each coordinate heme b. An a ubiquinone-binding site is contributed by His208. 4 consecutive transmembrane segments (helical) span residues 231-251 (YYVK…IFIF), 295-316 (AGGV…FLNQ), 328-348 (IYHI…WIGC), and 355-374 (FVTI…AIMP).

It belongs to the cytochrome b family. The main subunits of complex b-c1 are: cytochrome b, cytochrome c1 and the Rieske protein. Heme b is required as a cofactor.

It is found in the mitochondrion inner membrane. Functionally, component of the ubiquinol-cytochrome c reductase complex (complex III or cytochrome b-c1 complex) that is part of the mitochondrial respiratory chain. The b-c1 complex mediates electron transfer from ubiquinol to cytochrome c. Contributes to the generation of a proton gradient across the mitochondrial membrane that is then used for ATP synthesis. The chain is Cytochrome b (MT-CYB) from Daucus carota (Wild carrot).